A 203-amino-acid chain; its full sequence is dTTP/UTP pyrophosphatase (203 aa).

The active-site Proton acceptor is Asp-74.

This sequence belongs to the Maf family. YhdE subfamily. The cofactor is a divalent metal cation.

The protein resides in the cytoplasm. It catalyses the reaction dTTP + H2O = dTMP + diphosphate + H(+). It carries out the reaction UTP + H2O = UMP + diphosphate + H(+). Functionally, nucleoside triphosphate pyrophosphatase that hydrolyzes dTTP and UTP. May have a dual role in cell division arrest and in preventing the incorporation of modified nucleotides into cellular nucleic acids. The sequence is that of dTTP/UTP pyrophosphatase from Treponema denticola (strain ATCC 35405 / DSM 14222 / CIP 103919 / JCM 8153 / KCTC 15104).